The sequence spans 488 residues: ATP synthase subunit beta (488 aa).

164 to 171 (GGAGVGKT) lines the ATP pocket.

Belongs to the ATPase alpha/beta chains family. As to quaternary structure, F-type ATPases have 2 components, CF(1) - the catalytic core - and CF(0) - the membrane proton channel. CF(1) has five subunits: alpha(3), beta(3), gamma(1), delta(1), epsilon(1). CF(0) has four main subunits: a(1), b(1), b'(1) and c(9-12).

Its subcellular location is the cellular thylakoid membrane. The enzyme catalyses ATP + H2O + 4 H(+)(in) = ADP + phosphate + 5 H(+)(out). Its function is as follows. Produces ATP from ADP in the presence of a proton gradient across the membrane. The catalytic sites are hosted primarily by the beta subunits. This chain is ATP synthase subunit beta, found in Prochlorococcus marinus (strain NATL1A).